A 307-amino-acid polypeptide reads, in one-letter code: tRNA pseudouridine synthase B (307 aa).

Aspartate 38 acts as the Nucleophile in catalysis.

This sequence belongs to the pseudouridine synthase TruB family. Type 1 subfamily.

The enzyme catalyses uridine(55) in tRNA = pseudouridine(55) in tRNA. Its function is as follows. Responsible for synthesis of pseudouridine from uracil-55 in the psi GC loop of transfer RNAs. The sequence is that of tRNA pseudouridine synthase B from Bacillus cytotoxicus (strain DSM 22905 / CIP 110041 / 391-98 / NVH 391-98).